The sequence spans 103 residues: Histone H4 (103 aa).

A compositionally biased stretch (gly residues) spans 1 to 14; sequence MSGRGKGGKGLGKG. Residues 1–20 form a disordered region; the sequence is MSGRGKGGKGLGKGGAKRHR. Lys6 is modified (N6-acetyl-N6-methyllysine; alternate). 3 positions are modified to N6-methyllysine; alternate: Lys6, Lys9, and Lys13. Lys13 carries the N6-acetyl-N6-methyllysine; alternate modification. A DNA-binding region spans residues 17–21; that stretch reads KRHRK. Position 92 is an N6-glutaryllysine (Lys92).

The protein belongs to the histone H4 family. The nucleosome is a histone octamer containing two molecules each of H2A, H2B, H3 and H4 assembled in one H3-H4 heterotetramer and two H2A-H2B heterodimers. The octamer wraps approximately 147 bp of DNA. Glutarylation at Lys-92 (H4K91glu) destabilizes nucleosomes by promoting dissociation of the H2A-H2B dimers from nucleosomes.

It is found in the nucleus. The protein resides in the chromosome. Core component of nucleosome. Nucleosomes wrap and compact DNA into chromatin, limiting DNA accessibility to the cellular machineries which require DNA as a template. Histones thereby play a central role in transcription regulation, DNA repair, DNA replication and chromosomal stability. DNA accessibility is regulated via a complex set of post-translational modifications of histones, also called histone code, and nucleosome remodeling. The chain is Histone H4 (H4.1) from Phanerodontia chrysosporium (White-rot fungus).